A 274-amino-acid chain; its full sequence is Large ribosomal subunit protein uL2cz (274 aa).

Disordered stretches follow at residues 1–25 and 224–274; these read MAIH…VKSN and NPVD…RRSK. Residues 7-25 are compositionally biased toward polar residues; sequence KTSTPSTRNGTVDSQVKSN.

It belongs to the universal ribosomal protein uL2 family. As to quaternary structure, part of the 50S ribosomal subunit.

It is found in the plastid. The protein localises to the chloroplast. This is Large ribosomal subunit protein uL2cz (rpl2-A) from Atropa belladonna (Belladonna).